The following is a 747-amino-acid chain: DNA ligase 1 (747 aa).

The tract at residues 1 to 84 is disordered; it reads MQKSITSFFK…KEVDDKTTDK (84 aa). Phosphoserine is present on residues Ser18, Ser20, Ser42, Ser44, Ser46, Ser60, and Ser65. Basic and acidic residues predominate over residues 26–42; it reads PKIDAKTELPDEPHIKS. Basic and acidic residues predominate over residues 60–84; the sequence is SEEKTSPVKNVKKEPKEVDDKTTDK. Lys395 acts as the N6-AMP-lysine intermediate in catalysis. The segment covering 725-740 has biased composition (polar residues); that stretch reads QSQDQVKNNQKSSTQM. Positions 725–747 are disordered; it reads QSQDQVKNNQKSSTQMEMEDEFY.

The protein belongs to the ATP-dependent DNA ligase family.

Its subcellular location is the nucleus. The enzyme catalyses ATP + (deoxyribonucleotide)n-3'-hydroxyl + 5'-phospho-(deoxyribonucleotide)m = (deoxyribonucleotide)n+m + AMP + diphosphate.. In terms of biological role, DNA ligase that seals nicks in double-stranded DNA during DNA replication, DNA recombination and DNA repair. In Drosophila melanogaster (Fruit fly), this protein is DNA ligase 1.